A 569-amino-acid chain; its full sequence is Proton-coupled zinc antiporter SLC30A9, mitochondrial (569 aa).

The transit peptide at 1 to 68 (MLPGLAAAAA…IGTLSQVKLY (68 aa)) directs the protein to the mitochondrion. 5 helical membrane passes run 240-260 (VVMV…LAWI), 315-335 (GVGI…MGLL), 343-363 (LLWA…TLLV), 393-413 (VILL…TCMG), and 425-445 (SLGS…LIYT). An LXXLL motif motif is present at residues 463–467 (LTELL).

It belongs to the cation diffusion facilitator (CDF) transporter (TC 2.A.4) family. SLC30A subfamily. In terms of assembly, interacts with GRIP1, ESR1, AR and CTNNB1.

The protein resides in the mitochondrion membrane. Its subcellular location is the nucleus. It localises to the endoplasmic reticulum. The enzyme catalyses Zn(2+)(in) + 2 H(+)(out) = Zn(2+)(out) + 2 H(+)(in). In terms of biological role, mitochondrial proton-coupled zinc ion antiporter mediating the export of zinc from the mitochondria and involved in zinc homeostasis, zinc mobilization as well as mitochondrial morphology and health. In nucleus, functions as a secondary coactivator for nuclear receptors by cooperating with p160 coactivators subtypes. Plays a role in transcriptional activation of Wnt-responsive genes. The sequence is that of Proton-coupled zinc antiporter SLC30A9, mitochondrial (SLC30A9) from Pongo abelii (Sumatran orangutan).